Reading from the N-terminus, the 148-residue chain is MDRLDDTDERILAELAEHARATFAEIGHKVSLSAPAVKRRVDRMLESGVIKGFTTVVDRNALGWNTEAYVQIFCHGRIAPDQLRAAWVNIPEVVSAATVTGTSDAILHVLAHDMRHLEAALERIRSSADVERSESTVVLSNLIDRMPP.

The HTH asnC-type domain occupies 4–65; it reads LDDTDERILA…VVDRNALGWN (62 aa). Positions 23 to 42 form a DNA-binding region, H-T-H motif; sequence FAEIGHKVSLSAPAVKRRVD.

Homodimer. Forms oligomers.

With respect to regulation, the DNA-binding activity of Rv2324 is modulated by interaction of Rv2324 with amino acids. Aspartate is the only effector amino acid that completely abolishes DNA binding. The majority of amino acids induce a dimer-tetramer or dimer-hexamer oligomeric transition. In response to amino-acid binding, adopts an open quaternary association, which is a part of the functional requirement to bind to non-symmetrically distributed target DNA binding sites. Functionally, transcriptional regulator involved in growth, DNA replication and damage control. Plays a crucial role in regulating survival and growth of M.tuberculosis. Could function as a global regulator in both the latent/persistent and active phases of growth. Binds to its own promoter region and to promoters of multiple metabolic genes, such as serB2, lat, ald and roc operon. In vitro, interacts with intrinsically curved and non-curved DNA molecules, and with both supercoiled and linear DNA, with higher affinity for supercoiled DNA. Binds to DNA recombination, replication and repair intermediates. The sequence is that of HTH-type transcriptional regulator Rv2324 from Mycobacterium tuberculosis (strain ATCC 25618 / H37Rv).